A 116-amino-acid polypeptide reads, in one-letter code: Tyrosine-protein phosphatase 20 (116 aa).

A Tyrosine-protein phosphatase domain is found at Trp-1–Val-116. Asp-84 provides a ligand contact to substrate.

This sequence belongs to the protein-tyrosine phosphatase family.

It catalyses the reaction O-phospho-L-tyrosyl-[protein] + H2O = L-tyrosyl-[protein] + phosphate. The protein is Tyrosine-protein phosphatase 20 (STY-20) of Styela plicata (Wrinkled sea squirt).